The sequence spans 132 residues: Urease subunit beta (132 aa).

Belongs to the urease beta subunit family. In terms of assembly, heterotrimer of UreA (gamma), UreB (beta) and UreC (alpha) subunits. Three heterotrimers associate to form the active enzyme.

Its subcellular location is the cytoplasm. The enzyme catalyses urea + 2 H2O + H(+) = hydrogencarbonate + 2 NH4(+). It participates in nitrogen metabolism; urea degradation; CO(2) and NH(3) from urea (urease route): step 1/1. The chain is Urease subunit beta from Natronomonas pharaonis (strain ATCC 35678 / DSM 2160 / CIP 103997 / JCM 8858 / NBRC 14720 / NCIMB 2260 / Gabara) (Halobacterium pharaonis).